Reading from the N-terminus, the 173-residue chain is Large ribosomal subunit protein uL10 (173 aa).

This sequence belongs to the universal ribosomal protein uL10 family. Part of the ribosomal stalk of the 50S ribosomal subunit. The N-terminus interacts with L11 and the large rRNA to form the base of the stalk. The C-terminus forms an elongated spine to which L12 dimers bind in a sequential fashion forming a multimeric L10(L12)X complex.

Forms part of the ribosomal stalk, playing a central role in the interaction of the ribosome with GTP-bound translation factors. The polypeptide is Large ribosomal subunit protein uL10 (Corynebacterium aurimucosum (strain ATCC 700975 / DSM 44827 / CIP 107346 / CN-1) (Corynebacterium nigricans)).